The sequence spans 256 residues: Protein FixA (256 aa).

Belongs to the ETF beta-subunit/FixA family. As to quaternary structure, heterodimer of FixA and FixB.

The protein operates within amine and polyamine metabolism; carnitine metabolism. Required for anaerobic carnitine reduction. May bring reductant to CaiA. This Escherichia coli O139:H28 (strain E24377A / ETEC) protein is Protein FixA.